The chain runs to 121 residues: Large ribosomal subunit protein uL18 (121 aa).

This sequence belongs to the universal ribosomal protein uL18 family. Part of the 50S ribosomal subunit; part of the 5S rRNA/L5/L18/L25 subcomplex. Contacts the 5S and 23S rRNAs.

Its function is as follows. This is one of the proteins that bind and probably mediate the attachment of the 5S RNA into the large ribosomal subunit, where it forms part of the central protuberance. The chain is Large ribosomal subunit protein uL18 from Herpetosiphon aurantiacus (strain ATCC 23779 / DSM 785 / 114-95).